Consider the following 338-residue polypeptide: MRRLNRKNNEALKKLNDRQRKVLYCIVREYIENKKPVSSQRVLEVSNIEFSSATIRNDMKKLEYLGYIYQPHTSAGRIPTDKGLRFYYEEMLKISKETSEADLAVETFKSVPLADPEKILFLAGNLLARLTQGYVLIERPNTRDLKILRVMLIPVSEDYLIFSILTEFGVSRVTPIKTQERLNWEEIERQLNFLLRGRTIGEVLMGKIESLKGSGFLRLIESLIGETVERYLDAGLENLLKDETLTLEDIRNLLEEVKDQKFLESLVGEGITVRIGREIGRKNLEKFAVFSGRYFKGESPIGSVYFFTSKVTRYDRNHKIFEYILNRLSEYFTSTSRR.

This sequence belongs to the HrcA family.

Its function is as follows. Negative regulator of class I heat shock genes (grpE-dnaK-dnaJ and groELS operons). Prevents heat-shock induction of these operons. This Thermotoga sp. (strain RQ2) protein is Heat-inducible transcription repressor HrcA.